A 141-amino-acid chain; its full sequence is Hemoglobin subunit alpha-A (141 aa).

A Globin domain is found at 1–141; that stretch reads VLSAADKTNV…VGTVLTAKYR (141 aa). Residue His-58 coordinates O2. His-87 contributes to the heme b binding site.

It belongs to the globin family. Heterotetramer of two alpha chains and two beta chains. As to expression, red blood cells.

Involved in oxygen transport from the lung to the various peripheral tissues. In Branta canadensis (Canada goose), this protein is Hemoglobin subunit alpha-A (HBAA).